The primary structure comprises 286 residues: Foldase protein PrsA 1 (286 aa).

The signal sequence occupies residues 1 to 18; it reads MKKAMLALAATSVIALSA. Residue Cys19 is the site of N-palmitoyl cysteine attachment. A lipid anchor (S-diacylglycerol cysteine) is attached at Cys19. Residues 130–220 enclose the PpiC domain; that stretch reads KPEIKASHIL…FGYHIIKVTD (91 aa).

The protein belongs to the PrsA family.

The protein resides in the cell membrane. It carries out the reaction [protein]-peptidylproline (omega=180) = [protein]-peptidylproline (omega=0). Plays a major role in protein secretion by helping the post-translocational extracellular folding of several secreted proteins. The protein is Foldase protein PrsA 1 (prsA1) of Bacillus cereus (strain ATCC 14579 / DSM 31 / CCUG 7414 / JCM 2152 / NBRC 15305 / NCIMB 9373 / NCTC 2599 / NRRL B-3711).